The sequence spans 83 residues: MFKHVLLSIIIFLGINQNVYSINSNSYKTDDIIKIVIILGIVILIFSPAKFRIIVIGTILGLACAYFTYKYIIPIFIASLNAA.

The next 3 helical transmembrane spans lie at Val5–Ile22, Ile32–Ala49, and Ile56–Ala78.

Its subcellular location is the cell membrane. This is an uncharacterized protein from Rickettsia prowazekii (strain Madrid E).